The chain runs to 116 residues: MYNIIIIVLSILAVTAALVFAAHFLPSRKLDLENGSPYECGFDPLNSARVPFSFRFFLVAILFLLFDLEIALLFPFPQALFIFNSSHVLYIATLFLAILLIGLIFEWTQGGLDWAE.

Transmembrane regions (helical) follow at residues 4 to 24 (IIII…AAHF), 56 to 76 (FFLV…LFPF), and 88 to 108 (VLYI…FEWT).

This sequence belongs to the complex I subunit 3 family.

The protein resides in the mitochondrion membrane. It catalyses the reaction a ubiquinone + NADH + 5 H(+)(in) = a ubiquinol + NAD(+) + 4 H(+)(out). Its function is as follows. Core subunit of the mitochondrial membrane respiratory chain NADH dehydrogenase (Complex I) that is believed to belong to the minimal assembly required for catalysis. Complex I functions in the transfer of electrons from NADH to the respiratory chain. The immediate electron acceptor for the enzyme is believed to be ubiquinone. The sequence is that of NADH-ubiquinone oxidoreductase chain 3 (ND3) from Pisaster ochraceus (Ochre sea star).